A 423-amino-acid chain; its full sequence is tRNA(Ile)-lysidine synthase (423 aa).

43–48 contacts ATP; that stretch reads SSGVDS.

It belongs to the tRNA(Ile)-lysidine synthase family.

It is found in the cytoplasm. The enzyme catalyses cytidine(34) in tRNA(Ile2) + L-lysine + ATP = lysidine(34) in tRNA(Ile2) + AMP + diphosphate + H(+). In terms of biological role, ligates lysine onto the cytidine present at position 34 of the AUA codon-specific tRNA(Ile) that contains the anticodon CAU, in an ATP-dependent manner. Cytidine is converted to lysidine, thus changing the amino acid specificity of the tRNA from methionine to isoleucine. This chain is tRNA(Ile)-lysidine synthase, found in Helicobacter hepaticus (strain ATCC 51449 / 3B1).